A 273-amino-acid chain; its full sequence is Phosphatidylglycerol--prolipoprotein diacylglyceryl transferase (273 aa).

Transmembrane regions (helical) follow at residues 20–40 (LAVR…LPIA), 59–79 (FLFY…VLFY), and 97–117 (GGMS…YFSW). Residue R142 coordinates a 1,2-diacyl-sn-glycero-3-phospho-(1'-sn-glycerol). A run of 2 helical transmembrane segments spans residues 206–226 (FGFL…FCEF) and 243–263 (MGQL…VYAM).

Belongs to the Lgt family.

Its subcellular location is the cell inner membrane. It catalyses the reaction L-cysteinyl-[prolipoprotein] + a 1,2-diacyl-sn-glycero-3-phospho-(1'-sn-glycerol) = an S-1,2-diacyl-sn-glyceryl-L-cysteinyl-[prolipoprotein] + sn-glycerol 1-phosphate + H(+). It participates in protein modification; lipoprotein biosynthesis (diacylglyceryl transfer). Functionally, catalyzes the transfer of the diacylglyceryl group from phosphatidylglycerol to the sulfhydryl group of the N-terminal cysteine of a prolipoprotein, the first step in the formation of mature lipoproteins. The sequence is that of Phosphatidylglycerol--prolipoprotein diacylglyceryl transferase from Gluconobacter oxydans (strain 621H) (Gluconobacter suboxydans).